Here is a 535-residue protein sequence, read N- to C-terminus: NAD(P)H-quinone oxidoreductase chain 4 2 (535 aa).

A run of 14 helical transmembrane segments spans residues 9-29 (FPWL…IPLI), 51-71 (WFAL…FYVG), 106-126 (LILL…PVTL), 130-150 (LFYF…AVQD), 152-172 (LLFF…LSIW), 184-204 (FILY…AMAF), 227-247 (LLLY…FPLH), 258-278 (TAPV…YALM), 290-310 (LYFA…AALT), 326-346 (ISHM…GMSG), 347-367 (AMLQ…LVGA), 399-419 (LASL…VFIG), 432-452 (LVVV…LLSM), and 479-499 (VFII…PKLV).

The protein belongs to the complex I subunit 4 family.

The protein resides in the cellular thylakoid membrane. It catalyses the reaction a plastoquinone + NADH + (n+1) H(+)(in) = a plastoquinol + NAD(+) + n H(+)(out). The enzyme catalyses a plastoquinone + NADPH + (n+1) H(+)(in) = a plastoquinol + NADP(+) + n H(+)(out). Functionally, NDH-1 shuttles electrons from NAD(P)H, via FMN and iron-sulfur (Fe-S) centers, to quinones in the respiratory chain. The immediate electron acceptor for the enzyme in this species is believed to be plastoquinone. Couples the redox reaction to proton translocation (for every two electrons transferred, four hydrogen ions are translocated across the cytoplasmic membrane), and thus conserves the redox energy in a proton gradient. The sequence is that of NAD(P)H-quinone oxidoreductase chain 4 2 from Synechococcus sp. (strain JA-3-3Ab) (Cyanobacteria bacterium Yellowstone A-Prime).